A 329-amino-acid polypeptide reads, in one-letter code: Mo25-like protein (329 aa).

This sequence belongs to the Mo25 family.

The polypeptide is Mo25-like protein (pmo25) (Schizosaccharomyces pombe (strain 972 / ATCC 24843) (Fission yeast)).